A 392-amino-acid chain; its full sequence is Lipase (392 aa).

The first 26 residues, 1 to 26 (MVSFISISQGVSLCLLVSSMMLGSSA), serve as a signal peptide directing secretion. The propeptide occupies 27–95 (VPVSGKSGSS…GGNLTSIGKR (69 aa)). Residues 50 to 69 (PLISSRCAPPSNKGSKSDLQ) form a disordered region. 3 disulfides stabilise this stretch: C152-C391, C163-C166, and C358-C367. S268 serves as the catalytic Nucleophile. The Charge relay system role is filled by D327. D379 contacts Ca(2+). The active-site Charge relay system is H380.

This sequence belongs to the AB hydrolase superfamily. Lipase family.

It is found in the secreted. Its subcellular location is the extracellular space. It catalyses the reaction a triacylglycerol + H2O = a diacylglycerol + a fatty acid + H(+). Its activity is regulated as follows. Lipase activity is maximal at a lipid-water interface (interfacial activation), probably by an induced conformational change that results in an increased accessibility of the active site to the substrate. Its function is as follows. Hydrolyzes ester bonds of triglycerides as well as of their derived partial glycerides with a strong 1,3-positional specificity. This chain is Lipase, found in Rhizopus niveus.